Here is a 188-residue protein sequence, read N- to C-terminus: NADH-quinone oxidoreductase subunit I 2 (188 aa).

2 4Fe-4S ferredoxin-type domains span residues 56 to 88 and 98 to 127; these read HFLK…VVPY and AKFE…LGQQ. Residues Cys-68, Cys-71, Cys-74, Cys-78, Cys-107, Cys-110, Cys-113, and Cys-117 each coordinate [4Fe-4S] cluster.

Belongs to the complex I 23 kDa subunit family. In terms of assembly, NDH-1 is composed of 14 different subunits. Subunits NuoA, H, J, K, L, M, N constitute the membrane sector of the complex. [4Fe-4S] cluster serves as cofactor.

It localises to the cell inner membrane. The enzyme catalyses a quinone + NADH + 5 H(+)(in) = a quinol + NAD(+) + 4 H(+)(out). Its function is as follows. NDH-1 shuttles electrons from NADH, via FMN and iron-sulfur (Fe-S) centers, to quinones in the respiratory chain. The immediate electron acceptor for the enzyme in this species is believed to be ubiquinone. Couples the redox reaction to proton translocation (for every two electrons transferred, four hydrogen ions are translocated across the cytoplasmic membrane), and thus conserves the redox energy in a proton gradient. This Rhizobium etli (strain ATCC 51251 / DSM 11541 / JCM 21823 / NBRC 15573 / CFN 42) protein is NADH-quinone oxidoreductase subunit I 2.